The following is a 133-amino-acid chain: UPF0146 protein MTH_1000 (133 aa).

Belongs to the UPF0146 family.

The protein is UPF0146 protein MTH_1000 of Methanothermobacter thermautotrophicus (strain ATCC 29096 / DSM 1053 / JCM 10044 / NBRC 100330 / Delta H) (Methanobacterium thermoautotrophicum).